Reading from the N-terminus, the 438-residue chain is EF-hand calcium-binding domain-containing protein 3 (438 aa).

EF-hand domains follow at residues 47–82 and 83–118; these read SQMRAFQDAYNFFNKDKTGCIDLHGMMCTLAKLGMN and LTKHDVHNELRCADIDQDGKVNFSDFLKVLTDKNRF. Residues Asp-96, Asp-98, Asp-100, Lys-102, and Asp-107 each contribute to the Ca(2+) site. At Tyr-279 the chain carries Phosphotyrosine. Positions 413 to 438 are disordered; that stretch reads SSSDISECDTDTGRKRKRKGFKGFRQ. Over residues 426-438 the composition is skewed to basic residues; that stretch reads RKRKRKGFKGFRQ.

This is EF-hand calcium-binding domain-containing protein 3 (EFCAB3) from Bos taurus (Bovine).